A 131-amino-acid polypeptide reads, in one-letter code: Large ribosomal subunit protein bL17 (131 aa).

Belongs to the bacterial ribosomal protein bL17 family. As to quaternary structure, part of the 50S ribosomal subunit. Contacts protein L32.

The protein is Large ribosomal subunit protein bL17 of Methylacidiphilum infernorum (isolate V4) (Methylokorus infernorum (strain V4)).